The sequence spans 312 residues: Olfactory receptor 4F15 (312 aa).

The Extracellular portion of the chain corresponds to 1 to 25 (MNGMNHSVVSEFVFMGLTNSREIQL). Residue Asn5 is glycosylated (N-linked (GlcNAc...) asparagine). A helical membrane pass occupies residues 26–49 (LLFVFSLLFYFASMMGNLVIVFTV). Residues 50 to 57 (TMDAHLHS) lie on the Cytoplasmic side of the membrane. Residues 58–79 (PMYFLLANLSIIDMAFCSITAP) form a helical membrane-spanning segment. Over 80 to 100 (KMICDIFKKHKAISFRGCITQ) the chain is Extracellular. Cysteines 97 and 189 form a disulfide. Residues 101–120 (IFFSHALGGTEMVLLIAMAF) traverse the membrane as a helical segment. Topologically, residues 121–139 (DRYMAICKPLHYLTIMSPR) are cytoplasmic. A helical membrane pass occupies residues 140-158 (MCLYFLATSSIIGLIHSLV). Residues 159–195 (QLVFVVDLPFCGPNIFDSFYCDLPRLLRLACTNTQEL) are Extracellular-facing. Residues 196–219 (EFMVTVNSGLISVGSFVLLVISYI) form a helical membrane-spanning segment. The Cytoplasmic portion of the chain corresponds to 220 to 235 (FILFTVWKHSSGGLAK). Residues 236–258 (ALSTLSAHVTVVILFFGPLMFFY) traverse the membrane as a helical segment. At 259–269 (TWPSPTSHLDK) the chain is on the extracellular side. Residues 270–289 (YLAIFDAFITPFLNPVIYTF) traverse the membrane as a helical segment. At 290–312 (RNKDMKVAMRRLCSRLAHFTKIL) the chain is on the cytoplasmic side.

This sequence belongs to the G-protein coupled receptor 1 family.

It is found in the cell membrane. In terms of biological role, odorant receptor. In Homo sapiens (Human), this protein is Olfactory receptor 4F15 (OR4F15).